The primary structure comprises 84 residues: UPF0457 protein BT9727_2307 (84 aa).

The protein belongs to the UPF0457 family.

The sequence is that of UPF0457 protein BT9727_2307 from Bacillus thuringiensis subsp. konkukian (strain 97-27).